A 718-amino-acid polypeptide reads, in one-letter code: Polyribonucleotide nucleotidyltransferase (718 aa).

Residues Asp497 and Asp503 each coordinate Mg(2+). The KH domain maps to 564 to 623 (PRLLTLKIEPEHIGMVIGPGGKTIKGITEQTSCKIDIADDGTVTIASSEGERAERARQMI). Residues 633–701 (GEVYLGRVTR…SKGRLNLTRL (69 aa)) enclose the S1 motif domain.

Belongs to the polyribonucleotide nucleotidyltransferase family. Interacts with RNase E (rne). It depends on Mg(2+) as a cofactor.

Its subcellular location is the cytoplasm. The catalysed reaction is RNA(n+1) + phosphate = RNA(n) + a ribonucleoside 5'-diphosphate. In terms of biological role, involved in mRNA degradation. Catalyzes the phosphorolysis of single-stranded polyribonucleotides processively in the 3'- to 5'-direction. The polypeptide is Polyribonucleotide nucleotidyltransferase (Synechocystis sp. (strain ATCC 27184 / PCC 6803 / Kazusa)).